A 415-amino-acid chain; its full sequence is G patch domain-containing protein 4 (415 aa).

Met-1 carries the N-acetylmethionine modification. Thr-4 bears the Phosphothreonine mark. The region spanning 11 to 57 (GMKFAEEQLLKHGWTQGKGLGRRENGITQALKVTLKQDNHGVGHDPA) is the G-patch domain. Lys-46 is covalently cross-linked (Glycyl lysine isopeptide (Lys-Gly) (interchain with G-Cter in SUMO2)). Position 116 is a phosphothreonine (Thr-116). 2 disordered regions span residues 116 to 141 (TSGEEKPDRDLGNCSDVDNHEPTPPK) and 191 to 415 (LGTS…VDLS). Residues 118–141 (GEEKPDRDLGNCSDVDNHEPTPPK) show a composition bias toward basic and acidic residues. Ser-130 is modified (phosphoserine). The segment covering 191–201 (LGTSQPLTDSE) has biased composition (polar residues). Basic and acidic residues predominate over residues 224-239 (SLGDELLGHTDRSFRD). Phosphoserine is present on Ser-258. The segment covering 335 to 345 (EDLDTQEEEGK) has biased composition (acidic residues). The span at 353–364 (RKVRRKDKRKRQ) shows a compositional bias: basic residues. Residues 387 to 397 (AGERSRQYPKE) show a composition bias toward basic and acidic residues. Residues 398–407 (RAKKKKRKRD) are compositionally biased toward basic residues.

The polypeptide is G patch domain-containing protein 4 (Gpatch4) (Mus musculus (Mouse)).